The sequence spans 356 residues: Tyrosinase P (356 aa).

The N-terminal stretch at 1 to 19 (MGFYRNLVLVAASCTQALG) is a signal peptide. Asn81 carries an N-linked (GlcNAc...) asparagine glycan. Cu cation contacts are provided by His87 and His96. N-linked (GlcNAc...) asparagine glycosylation is found at Asn148 and Asn193. His203 lines the Cu cation pocket. N-linked (GlcNAc...) asparagine glycosylation occurs at Asn226. Cu cation is bound by residues His263 and His286. N-linked (GlcNAc...) asparagine glycosylation occurs at Asn309.

It belongs to the tyrosinase family. The cofactor is Cu(2+). Glycosylated.

It is found in the endoplasmic reticulum lumen. The protein resides in the golgi apparatus lumen. The enzyme catalyses aspulvinone E + O2 = (5Z)-3-(3,4-dihydroxyphenyl)-5-[(3,4-dihydroxyphenyl)methylidene]-5-oxo-2,5-dihydrofuran-3-olate. It catalyses the reaction aspulvinone E + O2 = (2Z)-2-[(3,4-dioxocyclohexa-1,5-dien-1-yl)methylidene]-4-(4-hydroxyphenyl)-5-oxo-2,5-dihydrofuran-3-olate + H2O. Activity is inhibited by the presence of dithiothreitol (DTT). In terms of biological role, tyrosinase; part of the gene cluster that mediates the biosynthesis of Asp-melanin, a pigment that confers resistance against UV light and hampers phagocytosis by soil amoeba. The nonribosomal peptide synthase melA converts 4-hydroxyphenylpyruvate (4-HPPA) to aspulvinone E. The tyrosinase tyrP then performs hydroxylations of both aromatic moieties of aspulvinone E. The product of tyrP is highly unstable, and, due to the high reactivity of methides and ortho-diquinones, the polymeric Asp-melanin forms spontaneously. The chain is Tyrosinase P (tyrP) from Aspergillus terreus.